The sequence spans 325 residues: GTP 3',8-cyclase (325 aa).

Residues 4–219 form the Radical SAM core domain; it reads NYNRNINYLR…HGLQQKFGLL (216 aa). GTP is bound at residue R13. Positions 20 and 24 each coordinate [4Fe-4S] cluster. Y26 contacts S-adenosyl-L-methionine. C27 provides a ligand contact to [4Fe-4S] cluster. Residue R63 participates in GTP binding. Position 67 (G67) interacts with S-adenosyl-L-methionine. T94 is a GTP binding site. S118 contacts S-adenosyl-L-methionine. K155 is a GTP binding site. Residue M189 participates in S-adenosyl-L-methionine binding. [4Fe-4S] cluster is bound by residues C254 and C257. 259–261 contributes to the GTP binding site; sequence RLR. [4Fe-4S] cluster is bound at residue C271.

Belongs to the radical SAM superfamily. MoaA family. In terms of assembly, monomer and homodimer. The cofactor is [4Fe-4S] cluster.

It carries out the reaction GTP + AH2 + S-adenosyl-L-methionine = (8S)-3',8-cyclo-7,8-dihydroguanosine 5'-triphosphate + 5'-deoxyadenosine + L-methionine + A + H(+). Its pathway is cofactor biosynthesis; molybdopterin biosynthesis. In terms of biological role, catalyzes the cyclization of GTP to (8S)-3',8-cyclo-7,8-dihydroguanosine 5'-triphosphate. In Desulforamulus reducens (strain ATCC BAA-1160 / DSM 100696 / MI-1) (Desulfotomaculum reducens), this protein is GTP 3',8-cyclase.